The following is a 445-amino-acid chain: FAS-associated factor 2 (445 aa).

Alanine 2 carries the N-acetylalanine modification. The region spanning 12–48 is the UBA domain; that stretch reads EQTEKLLQFQDLTGIESMDQCRHTLEQHNWNIEAAVQ. An N6-acetyllysine modification is found at lysine 167. A coiled-coil region spans residues 275–350; the sequence is SERLEREERN…EEKERKLECL (76 aa). Residues 299–361 form a disordered region; it reads ASLRADQEKE…PEPSPDDPES (63 aa). Over residues 303–348 the composition is skewed to basic and acidic residues; it reads ADQEKERKKREERERKRRKEEEVQQQKLAEERRRRNLQEEKERKLE. The 83-residue stretch at 357–439 folds into the UBX domain; that stretch reads DDPESVKIIF…GLSHTEVLFV (83 aa).

As to quaternary structure, identified in a complex that contains SEL1L, OS9, FAF2/UBXD8, UBE2J1/UBC6E and AUP1. Interacts with YOD1. Interacts (via N-terminus) with UBQLN2 (via C-terminus). Interacts with PNPLA2 and UBAC2. Interacts with ZFAND2B; probably through VCP. Interacts with LMBR1L.

The protein localises to the cytoplasm. The protein resides in the lipid droplet. Its subcellular location is the endoplasmic reticulum. Functionally, plays an important role in endoplasmic reticulum-associated degradation (ERAD) that mediates ubiquitin-dependent degradation of misfolded endoplasmic reticulum proteins. By controlling the steady-state expression of the IGF1R receptor, indirectly regulates the insulin-like growth factor receptor signaling pathway. Involved in inhibition of lipid droplet degradation by binding to phospholipase PNPL2 and inhibiting its activity by promoting dissociation of PNPL2 from its endogenous activator, ABHD5 which inhibits the rate of triacylglycerol hydrolysis. Involved in stress granule disassembly: associates with ubiquitinated G3BP1 in response to heat shock, thereby promoting interaction between ubiquitinated G3BP1 and VCP, followed by G3BP1 extraction from stress granules and stress granule disassembly. The protein is FAS-associated factor 2 (FAF2) of Bos taurus (Bovine).